The chain runs to 307 residues: NAD kinase 2 (307 aa).

D77 (proton acceptor) is an active-site residue. Residues 77–78 (DG), 151–152 (NE), D181, 192–197 (TAYALS), and N251 contribute to the NAD(+) site.

The protein belongs to the NAD kinase family. Requires a divalent metal cation as cofactor.

The protein localises to the cytoplasm. It carries out the reaction NAD(+) + ATP = ADP + NADP(+) + H(+). Functionally, involved in the regulation of the intracellular balance of NAD and NADP, and is a key enzyme in the biosynthesis of NADP. Catalyzes specifically the phosphorylation on 2'-hydroxyl of the adenosine moiety of NAD to yield NADP. This is NAD kinase 2 from Thermosynechococcus vestitus (strain NIES-2133 / IAM M-273 / BP-1).